The primary structure comprises 107 residues: Iron-binding protein IscA (107 aa).

The Fe cation site is built by Cys-35, Cys-99, and Cys-101.

This sequence belongs to the HesB/IscA family. In terms of assembly, homodimer; may form tetramers and higher multimers. Requires Fe cation as cofactor.

Its function is as follows. Is able to transfer iron-sulfur clusters to apo-ferredoxin. Multiple cycles of [2Fe2S] cluster formation and transfer are observed, suggesting that IscA acts catalytically. Recruits intracellular free iron so as to provide iron for the assembly of transient iron-sulfur cluster in IscU in the presence of IscS, L-cysteine and the thioredoxin reductase system TrxA/TrxB. The chain is Iron-binding protein IscA from Pectobacterium carotovorum subsp. carotovorum (strain PC1).